Here is a 75-residue protein sequence, read N- to C-terminus: Veswaprin-b (75 aa).

Positions 1 to 24 are cleaved as a signal peptide; that stretch reads MSSGGLLLLLGLLTLWAELTPISG. The segment at 23 to 42 is disordered; it reads SGQDRPKKPGLRPPRPQKPP. The 46-residue stretch at 27 to 72 folds into the WAP; atypical domain; the sequence is RPKKPGLRPPRPQKPPCVRECKNDWRCPGEQKCCRYGCIYECRDPI. 3 disulfides stabilise this stretch: Cys-43-Cys-64, Cys-47-Cys-59, and Cys-53-Cys-68.

This sequence belongs to the venom waprin family. Expressed by the venom gland.

Its subcellular location is the secreted. Functionally, damages membranes of susceptible bacteria. Has no hemolytic activity. Not toxic to mice. Does not inhibit the proteinases elastase and cathepsin G. This is Veswaprin-b from Demansia vestigiata (Lesser black whip snake).